The following is a 667-amino-acid chain: MDCRLHLVLFFSCVCLICLSGQQETGFVYNGFHQEDLFIDGIAMILPGGLLQLTNASQLKIGHAFFKQPFGFDPSSSLSFYTHFVCALVPPKFGAEVGHGMAFVVSPSMNFSHAFPTQYLGVFNSSTNVTSSSHLLAIELDTVETVDFHDLEKAHVGIDVNNPISIESALPSYFSDALGKNISINLVSGEPVQVWIDYDGSLLNVTLAPIEIQKPNRPLISRDINLSEIFQDKMYIGFSGSNGRLTSNQYILGWSFSKSKEFMQSLDLSKLPQAPIPRNEQAPVPREEKKKLHPLLIGLVILLVIPVLMVLGGVYWYRRKKYAEVKESWEKEYGPHRYSYKSLYKATNGFVKDALVGKGGFGKVYKGTLPGGRHIAVKRLSHDAEQGMKQFVAEVVTMGNIQHRNLVPLLGYCRRKGELLLVSEYMSNGSLDQYLFYNQNPSPSWLQRISILKDIASALNYLHSGANPAVLHRDIKASNVMLDSEYNGRLGDFGMAKFQDPQGNLSATAAVGTIGYMAPELIRTGTSKETDVYAFGIFLLEVTCGRRPFEPELPVQKKYLVKWVCECWKQASLLETRDPKLGREFLSEEVEMVLKLGLLCTNDVPESRPDMGQVMQYLSQKQPLPDFSADSPGIGGFMPVSVEPSSTIGIPDSSMHVTHSILEGYGR.

The first 21 residues, 1-21 (MDCRLHLVLFFSCVCLICLSG), serve as a signal peptide directing secretion. At 22–294 (QQETGFVYNG…PREEKKKLHP (273 aa)) the chain is on the extracellular side. The legume-lectin like stretch occupies residues 24 to 257 (ETGFVYNGFH…NQYILGWSFS (234 aa)). N-linked (GlcNAc...) asparagine glycosylation is found at Asn-55, Asn-110, Asn-124, Asn-128, Asn-181, Asn-204, and Asn-225. The helical transmembrane segment at 295 to 315 (LLIGLVILLVIPVLMVLGGVY) threads the bilayer. Over 316-667 (WYRRKKYAEV…THSILEGYGR (352 aa)) the chain is Cytoplasmic. The region spanning 350–625 (FVKDALVGKG…QYLSQKQPLP (276 aa)) is the Protein kinase domain. Residues 356–364 (VGKGGFGKV) and Lys-378 each bind ATP. The Proton acceptor role is filled by Asp-474.

It in the C-terminal section; belongs to the protein kinase superfamily. Ser/Thr protein kinase family. In the N-terminal section; belongs to the leguminous lectin family.

It localises to the cell membrane. It catalyses the reaction L-seryl-[protein] + ATP = O-phospho-L-seryl-[protein] + ADP + H(+). The catalysed reaction is L-threonyl-[protein] + ATP = O-phospho-L-threonyl-[protein] + ADP + H(+). In Arabidopsis thaliana (Mouse-ear cress), this protein is Putative L-type lectin-domain containing receptor kinase I.4 (LECRK14).